A 665-amino-acid chain; its full sequence is E3 ubiquitin-protein ligase cblA (665 aa).

The segment at 30 to 50 (NNNNNINNNNNNNNINSNNNG) is disordered. The 4H stretch occupies residues 109–231 (TSLVNYIHYE…NNENNNNNNN (123 aa)). Positions 109–400 (TSLVNYIHYE…PDIFKSILSF (292 aa)) constitute a Cbl-PTB domain. The EF-hand-like stretch occupies residues 232-306 (NYNPYELLSN…FKLSVFIKWF (75 aa)). Residues Asp287, Thr289, Asp291, and Tyr293 each coordinate Ca(2+). The interval 307 to 400 (GALPVSLGIF…PDIFKSILSF (94 aa)) is SH2-like. Disordered regions lie at residues 437–456 (ENNNNQNNNQNNNNNNINTF) and 467–609 (DSSN…NNNN). Residues 467–478 (DSSNSSDTNKSP) are compositionally biased toward low complexity. Residues 479 to 544 (TKSRKSSFKN…NNNNNNNNNN (66 aa)) adopt a coiled-coil conformation. Residues 486 to 512 (FKNDKDKKEKEKEKGKDKEKEKERVSD) show a composition bias toward basic and acidic residues. 2 stretches are compositionally biased toward low complexity: residues 530–561 (NNNNNNNNNNNNNNNNNNNNNNNNNNSSNNNN) and 571–609 (TSNGSSGNNNNNNNNNNNNNNNNNNNNSSSTTKRNNNNN). An RING-type zinc finger spans residues 618 to 653 (CTVCMDNEINTVFLECGHLSCCSLCSVKLKKCPICR).

In terms of processing, ubiquitinated.

The protein resides in the cytoplasm. The protein localises to the nucleus. It carries out the reaction S-ubiquitinyl-[E2 ubiquitin-conjugating enzyme]-L-cysteine + [acceptor protein]-L-lysine = [E2 ubiquitin-conjugating enzyme]-L-cysteine + N(6)-ubiquitinyl-[acceptor protein]-L-lysine.. It functions in the pathway protein modification; protein ubiquitination. Functionally, acts as an E3 ubiquitin-protein ligase, which accepts ubiquitin from specific E2 ubiquitin-conjugating enzymes, and then transfers it to substrates promoting their degradation by the proteasome. Up-regulates STATc tyrosine phosphorylation via an inhibitory effect on ptpC accumulation. Recognizes activated receptor tyrosine kinases, RTKs and terminates signaling. The sequence is that of E3 ubiquitin-protein ligase cblA (cblA-1) from Dictyostelium discoideum (Social amoeba).